The primary structure comprises 978 residues: Mineralocorticoid receptor (978 aa).

The interval 1–602 (METKGYHSLP…STGSSRPSKI (602 aa)) is modulating. Over residues 234–243 (SLTCSPSVEN) the composition is skewed to polar residues. 2 disordered regions span residues 234–331 (SLTC…STVG) and 353–372 (GAIQ…AHDV). A phosphoserine mark is found at serine 250, serine 259, serine 283, serine 287, and serine 299. A compositionally biased stretch (low complexity) spans 259 to 300 (SPLSSPLSSMKSPISSPPSHCSVKSPVSSPNNVPLRSSVSSP). Residues 301–331 (ANLNNSRCSVSSPSNTNNRSTLSSPTASTVG) show a composition bias toward polar residues. Residues cysteine 603, cysteine 606, cysteine 620, cysteine 623, cysteine 637, cysteine 643, cysteine 653, and cysteine 656 each contribute to the Zn(2+) site. 2 consecutive NR C4-type zinc fingers follow at residues 603-623 (CLVC…CGSC) and 637-661 (CAGR…LQKC). Residues 603–666 (CLVCGDEASG…RLQKCLQAGM (64 aa)) constitute a DNA-binding region (nuclear receptor). A hinge region spans residues 667-719 (NLGARKSKKLGKLKGLHEEQPQQPPPPPPQSPEEGTTYIAPTKEPSVNSALVP). The disordered stretch occupies residues 681–706 (GLHEEQPQQPPPPPPQSPEEGTTYIA). Residues 688 to 697 (QQPPPPPPQS) are compositionally biased toward pro residues. The NR LBD domain occupies 720–958 (QLASITRALT…EFPAMLVEII (239 aa)). 21-hydroxyprogesterone contacts are provided by asparagine 764 and glutamine 770. Aldosterone-binding residues include asparagine 764 and glutamine 770. Asparagine 764 and glutamine 770 together coordinate progesterone. Residues 776–779 (KWAK) are important for coactivator binding. Arginine 811 and threonine 939 together coordinate 21-hydroxyprogesterone. Aldosterone contacts are provided by arginine 811 and threonine 939. Progesterone contacts are provided by arginine 811 and threonine 939.

This sequence belongs to the nuclear hormone receptor family. NR3 subfamily. In terms of assembly, heteromultimeric cytoplasmic complex with HSP90, HSP70, and FKBP4, in the absence of ligand. After ligand binding, it translocates to the nucleus and binds to DNA as a homodimer and as a heterodimer with NR3C1. Binds the coactivator NCOA2. May interact with HSD11B2 in the absence of ligand. Binds the coactivators NCOA1, TIF1 and NRIP1. Phosphorylated. Expressed in heart and kidney.

The protein localises to the cytoplasm. The protein resides in the nucleus. It localises to the endoplasmic reticulum membrane. Receptor for both mineralocorticoids (MC) such as aldosterone and glucocorticoids (GC) such as corticosterone or cortisol. Binds to mineralocorticoid response elements (MRE) and transactivates target genes. The effect of MC is to increase ion and water transport and thus raise extracellular fluid volume and blood pressure and lower potassium levels. The protein is Mineralocorticoid receptor (Nr3c2) of Mus musculus (Mouse).